Consider the following 258-residue polypeptide: Enoyl-[acyl-carrier-protein] reductase [NADH] FabI (258 aa).

NAD(+) is bound by residues Gly14, 20–21 (SI), 67–68 (DV), and Ile95. Position 98 (Ala98) interacts with substrate. Active-site proton acceptor residues include Tyr148 and Tyr158. NAD(+) contacts are provided by residues Lys165 and 194–198 (IRTLS).

The protein belongs to the short-chain dehydrogenases/reductases (SDR) family. FabI subfamily. Homotetramer.

It catalyses the reaction a 2,3-saturated acyl-[ACP] + NAD(+) = a (2E)-enoyl-[ACP] + NADH + H(+). It carries out the reaction (2E)-butenoyl-[ACP] + NADH + H(+) = butanoyl-[ACP] + NAD(+). Its pathway is lipid metabolism; fatty acid biosynthesis. With respect to regulation, inhibited by triclosan and acrylamide. Functionally, catalyzes the reduction of a carbon-carbon double bond in an enoyl moiety that is covalently linked to an acyl carrier protein (ACP). Involved in the elongation cycle of fatty acid which are used in the lipid metabolism. This chain is Enoyl-[acyl-carrier-protein] reductase [NADH] FabI (fabI), found in Bacillus subtilis (strain 168).